The following is an 865-amino-acid chain: Rifampicin phosphotransferase (865 aa).

Positions 2 to 314 (SGRLVVDLQD…FHIVQSRPIT (313 aa)) are ATP-binding. 8 residues coordinate ATP: Lys-23, Arg-117, Gly-132, Thr-136, Gln-183, Glu-297, Gln-309, and Arg-311. Residues 327–752 (FRVYLSVGHQ…TSEGVALSGA (426 aa)) are rifampicin-binding. Residues 403–430 (ENGEFEPTPAETDGGAPPAGDGAEPDEA) are disordered. Over residues 409–424 (PTPAETDGGAPPAGDG) the composition is skewed to low complexity. The tract at residues 765 to 863 (GLAVSAGTVE…VHGTEGYIEL (99 aa)) is swivel phosphohistidine. Catalysis depends on His-823, which acts as the Tele-phosphohistidine intermediate.

This sequence belongs to the rifampicin phosphotransferase family.

It catalyses the reaction rifampicin + ATP + H2O = 21-phosphorifampicin + AMP + phosphate + 2 H(+). Its function is as follows. Catalyzes the phosphorylation of rifampicin, also known as rifampin (RIF), leading to its inactivation. Confers high level resistance to a variety of clinically used rifamycin antibiotics. In Streptomyces sp, this protein is Rifampicin phosphotransferase.